Here is an 855-residue protein sequence, read N- to C-terminus: DNA mismatch repair protein MutS (855 aa).

613–620 (GPNMGGKS) contributes to the ATP binding site. Residues 795–816 (ETTSLPHEVPSQQSGKPASPMQ) form a disordered region. Polar residues predominate over residues 796–816 (TTSLPHEVPSQQSGKPASPMQ).

The protein belongs to the DNA mismatch repair MutS family.

This protein is involved in the repair of mismatches in DNA. It is possible that it carries out the mismatch recognition step. This protein has a weak ATPase activity. This Pseudomonas paraeruginosa (strain DSM 24068 / PA7) (Pseudomonas aeruginosa (strain PA7)) protein is DNA mismatch repair protein MutS.